The following is a 457-amino-acid chain: Dynein regulatory complex protein 10 (457 aa).

Coiled-coil stretches lie at residues 101-127 (EKAS…DQER), 209-258 (IQDI…LHQV), and 292-381 (QQDI…AESE). The 30-residue stretch at 397-426 (MVRAATLIQAMWKGYLVRSMLRSRKKKRVK) folds into the IQ domain. The tract at residues 419-457 (SRKKKRVKSKGKDKGKGKEKPKEEKGKEKKAKGKGKGKK) is disordered. Residues 428–445 (KGKDKGKGKEKPKEEKGK) show a composition bias toward basic and acidic residues. Over residues 446 to 457 (EKKAKGKGKGKK) the composition is skewed to basic residues.

Belongs to the DRC10 family. In terms of assembly, component of the nexin-dynein regulatory complex (N-DRC). Interacts with CFAP52.

It is found in the cytoplasm. It localises to the cytoskeleton. The protein resides in the flagellum axoneme. Component of the nexin-dynein regulatory complex (N-DRC), a key regulator of ciliary/flagellar motility which maintains the alignment and integrity of the distal axoneme and regulates microtubule sliding in motile axonemes. The chain is Dynein regulatory complex protein 10 (Iqcd) from Rattus norvegicus (Rat).